Reading from the N-terminus, the 201-residue chain is Oligoribonuclease (201 aa).

The Exonuclease domain occupies 20–183 (LVWLDMEMTG…ADIHESIDEL (164 aa)). Residue Tyr-141 is part of the active site.

Belongs to the oligoribonuclease family.

The protein resides in the cytoplasm. Functionally, 3'-to-5' exoribonuclease specific for small oligoribonucleotides. This chain is Oligoribonuclease, found in Burkholderia pseudomallei (strain 1106a).